We begin with the raw amino-acid sequence, 254 residues long: Protein N-terminal and lysine N-methyltransferase EFM7 (254 aa).

S-adenosyl-L-methionine-binding positions include Trp57, 84-86 (GAA), Asp106, Trp138, and Ser165.

This sequence belongs to the class I-like SAM-binding methyltransferase superfamily. EFM7 family.

Its subcellular location is the cytoplasm. Its function is as follows. S-adenosyl-L-methionine-dependent protein methyltransferase that trimethylates the N-terminal glycine 'Gly-2' of elongation factor 1-alpha, before also catalyzing the mono- and dimethylation of 'Lys-3'. The polypeptide is Protein N-terminal and lysine N-methyltransferase EFM7 (Debaryomyces hansenii (strain ATCC 36239 / CBS 767 / BCRC 21394 / JCM 1990 / NBRC 0083 / IGC 2968) (Yeast)).